The following is a 551-amino-acid chain: MSRHFDRGSFRAVSDVHQLMSFPDFSASDAHVQWQRFNNLLWHHNDLGIWLDISRMHINAEDFERLGPRFDQAFKAMQALEQGAIANTDEQRMVGHYWLRQPQLAPDQEVCDHIAKEIDLIETFGSNVINGLIKAPNGKKFTDVLWIGIGGSGLGPLLMIRALQNAEQGLRFHFFDNVDPDGMSRVLGNLGDALSTTLVVTVSKSGATPEPHLGMEQARQRLEAMGGHWAGQAVAVTMLNSQLDQLAQKESWLKRFDMFDWVGGRTSITSAVGLLPAALIGCDIRAFLAGAAQMDEATRVSDLHSNPASLMAAAWFVAGDGLGRRDMVVLPYRDRLEVFSRYLQQLVMESLGKRLDRDGNVVHQGLAVYGNKGSTDQHAYVQQLRDGVDNFFATFIEVLEDVENIPAINNEHPGDFLDGFLQGTRAALSQGGRQSLTISMRRFDPRRLGALVALFERAVGLYGELVNINAYHQPGVESGKKAAAAILNLQSRVEDLLADGVERSAGEIHQVIGDGSEEAIFWIMRHLTANKRGYVAEGDWGIPTSLRFSKG.

Catalysis depends on E349, which acts as the Proton donor. Catalysis depends on residues H378 and K480.

Belongs to the GPI family.

The protein resides in the cytoplasm. The catalysed reaction is alpha-D-glucose 6-phosphate = beta-D-fructose 6-phosphate. It participates in carbohydrate biosynthesis; gluconeogenesis. It functions in the pathway carbohydrate degradation; glycolysis; D-glyceraldehyde 3-phosphate and glycerone phosphate from D-glucose: step 2/4. Its function is as follows. Catalyzes the reversible isomerization of glucose-6-phosphate to fructose-6-phosphate. In Prochlorococcus marinus (strain MIT 9313), this protein is Glucose-6-phosphate isomerase.